A 138-amino-acid chain; its full sequence is Putative nickel-responsive regulator (138 aa).

H78, H89, H91, and C97 together coordinate Ni(2+).

Belongs to the transcriptional regulatory CopG/NikR family. Ni(2+) serves as cofactor.

Its function is as follows. Transcriptional regulator. This chain is Putative nickel-responsive regulator, found in Desulfovibrio desulfuricans (strain ATCC 27774 / DSM 6949 / MB).